The following is a 172-amino-acid chain: Peptidyl-prolyl cis-trans isomerase (172 aa).

Residues 7–170 (FFDMSVGGQP…KKVVVEDCGQ (164 aa)) enclose the PPIase cyclophilin-type domain.

This sequence belongs to the cyclophilin-type PPIase family. Not glycosylated. Expressed in pollen.

The protein localises to the cytoplasm. The enzyme catalyses [protein]-peptidylproline (omega=180) = [protein]-peptidylproline (omega=0). Its activity is regulated as follows. Binds cyclosporin A (CsA). CsA mediates some of its effects via an inhibitory action on PPIase. Its function is as follows. PPIases accelerate the folding of proteins. It catalyzes the cis-trans isomerization of proline imidic peptide bonds in oligopeptides. This chain is Peptidyl-prolyl cis-trans isomerase (PCKR1), found in Catharanthus roseus (Madagascar periwinkle).